The chain runs to 130 residues: MAKVQYYGTGRRKKSVARVRLVPGDGKIIINERELDDYFGLETLKTIVKQPLVLTDTLGKFDVLCKVAGGGYTGQAGAIRHGISRALLKFDEELRPALKKAGFLTRDPRMKERKKYGLKKARRAPQFSKR.

The interval 105 to 130 (TRDPRMKERKKYGLKKARRAPQFSKR) is disordered. A compositionally biased stretch (basic residues) spans 111 to 130 (KERKKYGLKKARRAPQFSKR).

This sequence belongs to the universal ribosomal protein uS9 family.

In Acetivibrio thermocellus (strain ATCC 27405 / DSM 1237 / JCM 9322 / NBRC 103400 / NCIMB 10682 / NRRL B-4536 / VPI 7372) (Clostridium thermocellum), this protein is Small ribosomal subunit protein uS9.